The following is a 451-amino-acid chain: 2-succinylbenzoate--CoA ligase (451 aa).

Belongs to the ATP-dependent AMP-binding enzyme family. MenE subfamily.

The catalysed reaction is 2-succinylbenzoate + ATP + CoA = 2-succinylbenzoyl-CoA + AMP + diphosphate. It functions in the pathway quinol/quinone metabolism; 1,4-dihydroxy-2-naphthoate biosynthesis; 1,4-dihydroxy-2-naphthoate from chorismate: step 5/7. Its pathway is quinol/quinone metabolism; menaquinone biosynthesis. Functionally, converts 2-succinylbenzoate (OSB) to 2-succinylbenzoyl-CoA (OSB-CoA). The chain is 2-succinylbenzoate--CoA ligase from Lactococcus lactis subsp. lactis (strain IL1403) (Streptococcus lactis).